The sequence spans 388 residues: Phosphopentomutase (388 aa).

The Mn(2+) site is built by aspartate 11, aspartate 283, histidine 288, aspartate 324, histidine 325, and histidine 336.

This sequence belongs to the phosphopentomutase family. It depends on Mn(2+) as a cofactor.

It localises to the cytoplasm. It carries out the reaction 2-deoxy-alpha-D-ribose 1-phosphate = 2-deoxy-D-ribose 5-phosphate. The catalysed reaction is alpha-D-ribose 1-phosphate = D-ribose 5-phosphate. It participates in carbohydrate degradation; 2-deoxy-D-ribose 1-phosphate degradation; D-glyceraldehyde 3-phosphate and acetaldehyde from 2-deoxy-alpha-D-ribose 1-phosphate: step 1/2. Functionally, isomerase that catalyzes the conversion of deoxy-ribose 1-phosphate (dRib-1-P) and ribose 1-phosphate (Rib-1-P) to deoxy-ribose 5-phosphate (dRib-5-P) and ribose 5-phosphate (Rib-5-P), respectively. The sequence is that of Phosphopentomutase from Anaeromyxobacter sp. (strain K).